The chain runs to 364 residues: Putative agmatine deiminase (364 aa).

The active-site Amidino-cysteine intermediate is C355.

Belongs to the agmatine deiminase family.

The enzyme catalyses agmatine + H2O = N-carbamoylputrescine + NH4(+). This is Putative agmatine deiminase from Mycoplasma capricolum subsp. capricolum (strain California kid / ATCC 27343 / NCTC 10154).